A 285-amino-acid polypeptide reads, in one-letter code: Pantothenate synthetase (285 aa).

Residue 30–37 (MGYLHEGH) participates in ATP binding. Histidine 37 functions as the Proton donor in the catalytic mechanism. Residue glutamine 61 participates in (R)-pantoate binding. A beta-alanine-binding site is contributed by glutamine 61. Position 148–151 (148–151 (GKKD)) interacts with ATP. Glutamine 154 contributes to the (R)-pantoate binding site. ATP is bound by residues valine 177 and 185–188 (LSSR).

It belongs to the pantothenate synthetase family. Homodimer.

The protein resides in the cytoplasm. The catalysed reaction is (R)-pantoate + beta-alanine + ATP = (R)-pantothenate + AMP + diphosphate + H(+). The protein operates within cofactor biosynthesis; (R)-pantothenate biosynthesis; (R)-pantothenate from (R)-pantoate and beta-alanine: step 1/1. In terms of biological role, catalyzes the condensation of pantoate with beta-alanine in an ATP-dependent reaction via a pantoyl-adenylate intermediate. This Leptospira interrogans serogroup Icterohaemorrhagiae serovar Lai (strain 56601) protein is Pantothenate synthetase.